Consider the following 425-residue polypeptide: Phosphoribosylamine--glycine ligase (425 aa).

The 207-residue stretch at 109–315 folds into the ATP-grasp domain; that stretch reads KALMQEAGIP…LEELILACVQ (207 aa). Residue 135-195 participates in ATP binding; the sequence is IQAQGAPIVV…EECLTGQEVS (61 aa). Residues Glu285 and Asn287 each coordinate Mg(2+).

Belongs to the GARS family. Requires Mg(2+) as cofactor. Mn(2+) is required as a cofactor.

The catalysed reaction is 5-phospho-beta-D-ribosylamine + glycine + ATP = N(1)-(5-phospho-beta-D-ribosyl)glycinamide + ADP + phosphate + H(+). It participates in purine metabolism; IMP biosynthesis via de novo pathway; N(1)-(5-phospho-D-ribosyl)glycinamide from 5-phospho-alpha-D-ribose 1-diphosphate: step 2/2. The sequence is that of Phosphoribosylamine--glycine ligase from Nostoc sp. (strain PCC 7120 / SAG 25.82 / UTEX 2576).